The sequence spans 315 residues: tRNA pseudouridine synthase B (315 aa).

Residue Asp-54 is the Nucleophile of the active site.

The protein belongs to the pseudouridine synthase TruB family. Type 1 subfamily.

It carries out the reaction uridine(55) in tRNA = pseudouridine(55) in tRNA. Responsible for synthesis of pseudouridine from uracil-55 in the psi GC loop of transfer RNAs. This chain is tRNA pseudouridine synthase B, found in Agrobacterium fabrum (strain C58 / ATCC 33970) (Agrobacterium tumefaciens (strain C58)).